A 394-amino-acid polypeptide reads, in one-letter code: Elongation factor Tu (394 aa).

The tr-type G domain occupies 10-204 (KPHVNVGTIG…ALDTYIPEPE (195 aa)). Residues 19-26 (GHVDHGKT) form a G1 region. 19 to 26 (GHVDHGKT) lines the GTP pocket. T26 contacts Mg(2+). Residues 60–64 (GITIN) form a G2 region. Positions 81 to 84 (DCPG) are G3. Residues 81–85 (DCPGH) and 136–139 (NKCD) contribute to the GTP site. The tract at residues 136-139 (NKCD) is G4. The interval 174–176 (SAL) is G5.

The protein belongs to the TRAFAC class translation factor GTPase superfamily. Classic translation factor GTPase family. EF-Tu/EF-1A subfamily. As to quaternary structure, monomer.

It is found in the cytoplasm. It carries out the reaction GTP + H2O = GDP + phosphate + H(+). Functionally, GTP hydrolase that promotes the GTP-dependent binding of aminoacyl-tRNA to the A-site of ribosomes during protein biosynthesis. This is Elongation factor Tu from Vibrio cholerae serotype O1 (strain ATCC 39541 / Classical Ogawa 395 / O395).